We begin with the raw amino-acid sequence, 216 residues long: MSFFISLEGIEGSGKTTQIKRLADRLESLGHAVLITREPGGCPIADQIRQILLHPDNGHLDPKAELLLYAAARAQHVAEVIRPALDQGKIVLCDRYCDATLAYQGYARGLDLPMVKQLNELAAGNCRPHLTLLLDMPHDRGLLRARSRNALGAGPEEGRFEQESLAFHNKVRQGYLDLARQEPQRIKVVDANGTLDEVCHRIWLTTSNALNLPGGM.

Residue G9–T16 participates in ATP binding.

Belongs to the thymidylate kinase family.

It carries out the reaction dTMP + ATP = dTDP + ADP. Functionally, phosphorylation of dTMP to form dTDP in both de novo and salvage pathways of dTTP synthesis. The protein is Thymidylate kinase of Syntrophotalea carbinolica (strain DSM 2380 / NBRC 103641 / GraBd1) (Pelobacter carbinolicus).